The primary structure comprises 385 residues: Dual-specificity RNA methyltransferase RlmN (385 aa).

Glu113 functions as the Proton acceptor in the catalytic mechanism. The Radical SAM core domain occupies 120–352 (VGRAGALCVS…NRAGYASPIR (233 aa)). Cys127 and Cys363 form a disulfide bridge. Residues Cys134, Cys138, and Cys141 each contribute to the [4Fe-4S] cluster site. S-adenosyl-L-methionine contacts are provided by residues 189 to 190 (GE), Ser221, 243 to 245 (SLH), and Asn320. Cys363 functions as the S-methylcysteine intermediate in the catalytic mechanism.

This sequence belongs to the radical SAM superfamily. RlmN family. Requires [4Fe-4S] cluster as cofactor.

It is found in the cytoplasm. It carries out the reaction adenosine(2503) in 23S rRNA + 2 reduced [2Fe-2S]-[ferredoxin] + 2 S-adenosyl-L-methionine = 2-methyladenosine(2503) in 23S rRNA + 5'-deoxyadenosine + L-methionine + 2 oxidized [2Fe-2S]-[ferredoxin] + S-adenosyl-L-homocysteine. The catalysed reaction is adenosine(37) in tRNA + 2 reduced [2Fe-2S]-[ferredoxin] + 2 S-adenosyl-L-methionine = 2-methyladenosine(37) in tRNA + 5'-deoxyadenosine + L-methionine + 2 oxidized [2Fe-2S]-[ferredoxin] + S-adenosyl-L-homocysteine. In terms of biological role, specifically methylates position 2 of adenine 2503 in 23S rRNA and position 2 of adenine 37 in tRNAs. m2A2503 modification seems to play a crucial role in the proofreading step occurring at the peptidyl transferase center and thus would serve to optimize ribosomal fidelity. This Phenylobacterium zucineum (strain HLK1) protein is Dual-specificity RNA methyltransferase RlmN.